Here is a 551-residue protein sequence, read N- to C-terminus: Crossover junction endonuclease EME1B (551 aa).

Disordered stretches follow at residues 1–55 (MNDH…PIFV) and 187–239 (TTLP…RLEK). The span at 37 to 51 (SDPTPQKQPPESSFT) shows a compositional bias: polar residues. Residues 202-239 (SKEDKTSAMEEKKLRKEQERLEKAASKAEEAERKRLEK) show a composition bias toward basic and acidic residues. Residues 203 to 253 (KEDKTSAMEEKKLRKEQERLEKAASKAEEAERKRLEKEKKKWEKGKLALKS) adopt a coiled-coil conformation. One can recognise an ERCC4 domain in the interval 287-484 (NPIERSIVWT…PSMKSLLKVY (198 aa)).

Belongs to the EME1/MMS4 family. As to quaternary structure, forms a heterodimer with MUS81. Mg(2+) is required as a cofactor. It depends on Ca(2+) as a cofactor.

The protein resides in the nucleus. Functionally, interacts with MUS81 to form a DNA structure-specific endonuclease with substrate preference for branched DNA structures with a 5'-end at the branch nick. Typical substrates include 3'-flap structures, D-loops, replication forks, nicked Holliday junctions and also intact Holliday junctions with a reduced efficiency. May be required in mitosis for the processing of stalled or collapsed replication fork intermediates. Plays a role in DNA repair and in genotoxic stress-induced homologous recombination (HR) in somatic cells. Mediates a subset of meiotic recombination events that are insensitive to crossover interference. The protein is Crossover junction endonuclease EME1B (EME1B) of Arabidopsis thaliana (Mouse-ear cress).